A 289-amino-acid chain; its full sequence is Glucosamine-6-phosphate deaminase 1 (289 aa).

The Proton acceptor; for enolization step role is filled by Asp72. Asp141 acts as the For ring-opening step in catalysis. Catalysis depends on His143, which acts as the Proton acceptor; for ring-opening step. The For ring-opening step role is filled by Glu148. Residue Thr161 is modified to Phosphothreonine.

Belongs to the glucosamine/galactosamine-6-phosphate isomerase family. In terms of assembly, homohexamer. As to expression, widely expressed. Detected in brain, liver, kidney, muscle, ovary, testis, spermatids and spermatozoa. In spermatids, located close to the developing acrosome vesicle. In spermatozoa, found close to the acrosomal region.

It localises to the cytoplasm. The enzyme catalyses alpha-D-glucosamine 6-phosphate + H2O = beta-D-fructose 6-phosphate + NH4(+). The protein operates within nucleotide-sugar biosynthesis; UDP-N-acetyl-alpha-D-glucosamine biosynthesis; alpha-D-glucosamine 6-phosphate from D-fructose 6-phosphate: step 1/1. Its activity is regulated as follows. Allosterically activated by N-acetylglucosamine-6-phosphate (GlcNAc6P). In terms of biological role, catalyzes the reversible conversion of alpha-D-glucosamine 6-phosphate (GlcN-6P) into beta-D-fructose 6-phosphate (Fru-6P) and ammonium ion, a regulatory reaction step in de novo uridine diphosphate-N-acetyl-alpha-D-glucosamine (UDP-GlcNAc) biosynthesis via hexosamine pathway. Deamination is coupled to aldo-keto isomerization mediating the metabolic flux from UDP-GlcNAc toward Fru-6P. At high ammonium level can drive amination and isomerization of Fru-6P toward hexosamines and UDP-GlcNAc synthesis. Has a role in fine tuning the metabolic fluctuations of cytosolic UDP-GlcNAc and their effects on hyaluronan synthesis that occur during tissue remodeling. Seems to trigger calcium oscillations in mammalian eggs. These oscillations serve as the essential trigger for egg activation and early development of the embryo. The polypeptide is Glucosamine-6-phosphate deaminase 1 (Mus musculus (Mouse)).